Reading from the N-terminus, the 583-residue chain is Multidrug transporter QDR2 (583 aa).

Residues 23 to 46 are disordered; that stretch reads EKYDGPDLSEVDSEDNDKMIKTNE. An N-linked (GlcNAc...) asparagine glycan is attached at N60. Residues 88–108 form a helical membrane-spanning segment; it reads AYTGLFSTMAGAIYYPVLSVI. N-linked (GlcNAc...) asparagine glycosylation is present at N120. Helical transmembrane passes span 121-141, 148-168, 178-198, 208-228, and 238-258; these read ITVVVYFIFQGIAPTLMGGLA, PVVLFAVTVYFGACIGLACAQ, CLQAAGISPVIAINSGIIGDV, VGYISGFQVLGSAFGALIGAG, and IFWFLAIGSGVCLVFSIIMLP. N267 carries N-linked (GlcNAc...) asparagine glycosylation. The next 2 membrane-spanning stretches (helical) occupy residues 323–342 and 354–374; these read ILLVTAGIQFATWSTHQTAL and VAKIGLCYLPTGICTLISIVT. A glycan (N-linked (GlcNAc...) asparagine) is linked at N380. The next 4 membrane-spanning stretches (helical) occupy residues 432–452, 458–478, 493–513, and 524–544; these read HAAFVTLLLSSSGFVAFGWCI, LASVLVMSGFASLFSNCILTF, TATGCLNLFRCLLSALFIGCL, and GVFTFLGALTALSACPLFYLL.

Belongs to the major facilitator superfamily. CAR1 family.

The protein resides in the cell membrane. Multidrug resistance transporter involved in resistance to the antifungal drugs miconazole, tioconazole, clotrimazole, and ketoconazole; as well as to quinidine. Decreases the intracellular accumulation of clotrimazole in and plays a role in the extrusion of this antifungal from preloaded cells. This chain is Multidrug transporter QDR2, found in Candida glabrata (strain ATCC 2001 / BCRC 20586 / JCM 3761 / NBRC 0622 / NRRL Y-65 / CBS 138) (Yeast).